The following is a 325-amino-acid chain: Fructose-1,6-bisphosphatase class 1 (325 aa).

Glu-84, Asp-103, Leu-105, and Asp-106 together coordinate Mg(2+). Substrate contacts are provided by residues 106 to 109, Asn-196, and Lys-262; that span reads DGSS. Glu-268 contacts Mg(2+).

Belongs to the FBPase class 1 family. In terms of assembly, homotetramer. Requires Mg(2+) as cofactor.

The protein resides in the cytoplasm. It catalyses the reaction beta-D-fructose 1,6-bisphosphate + H2O = beta-D-fructose 6-phosphate + phosphate. Its pathway is carbohydrate biosynthesis; gluconeogenesis. The polypeptide is Fructose-1,6-bisphosphatase class 1 (Shewanella oneidensis (strain ATCC 700550 / JCM 31522 / CIP 106686 / LMG 19005 / NCIMB 14063 / MR-1)).